A 454-amino-acid chain; its full sequence is Histidine--tRNA ligase (454 aa).

The protein belongs to the class-II aminoacyl-tRNA synthetase family. As to quaternary structure, homodimer.

Its subcellular location is the cytoplasm. The catalysed reaction is tRNA(His) + L-histidine + ATP = L-histidyl-tRNA(His) + AMP + diphosphate + H(+). The protein is Histidine--tRNA ligase of Porphyromonas gingivalis (strain ATCC BAA-308 / W83).